Consider the following 617-residue polypeptide: Ceramide transfer protein (617 aa).

The span at 1–11 shows a compositional bias: polar residues; it reads MSDNQSWNSSG. Residues 1-23 form a disordered region; it reads MSDNQSWNSSGSEEDLETESGPP. Positions 23–117 constitute a PH domain; it reads PVERCGVLSK…WIDSIEQHKS (95 aa). Residues 268-302 adopt a coiled-coil conformation; that stretch reads REDSWQKRLDKEIEKRRRVEEAYKNAMTELKKKSH. The short motif at 320 to 326 is the FFAT element; sequence EFFDAVE. Positions 332–344 are enriched in basic and acidic residues; sequence QDKIEQSQSEKGR. The tract at residues 332–355 is disordered; sequence QDKIEQSQSEKGRSHWPSSLPSTE. The START domain occupies 383–611; sequence DEHRFRIQVE…FTSYVQEKTA (229 aa). Residues E466, Q487, N524, and Y572 each contribute to the an N-acylsphing-4-enine site.

It localises to the cytoplasm. Its subcellular location is the golgi apparatus. It is found in the endoplasmic reticulum. It carries out the reaction N-hexadecanoylsphing-4-enine(in) = N-hexadecanoylsphing-4-enine(out). Functionally, may mediate the intracellular trafficking of ceramide in a non-vesicular manner. This Xenopus tropicalis (Western clawed frog) protein is Ceramide transfer protein (cert1).